A 331-amino-acid chain; its full sequence is GTPase Obg (331 aa).

An Obg domain is found at 1–159 (MHFIDEVKIY…MWIHLRLKLL (159 aa)). One can recognise an OBG-type G domain in the interval 160–327 (SDVGLIGLPN…IVKLALEIIK (168 aa)). GTP contacts are provided by residues 166-173 (GLPNAGKS), 191-195 (FTTLV), 212-215 (DIPG), 279-282 (NKCD), and 308-310 (STY). Residues S173 and T193 each coordinate Mg(2+).

This sequence belongs to the TRAFAC class OBG-HflX-like GTPase superfamily. OBG GTPase family. Monomer. It depends on Mg(2+) as a cofactor.

The protein resides in the cytoplasm. An essential GTPase which binds GTP, GDP and possibly (p)ppGpp with moderate affinity, with high nucleotide exchange rates and a fairly low GTP hydrolysis rate. Plays a role in control of the cell cycle, stress response, ribosome biogenesis and in those bacteria that undergo differentiation, in morphogenesis control. This Rickettsia prowazekii (strain Madrid E) protein is GTPase Obg.